Here is a 317-residue protein sequence, read N- to C-terminus: Ribose-phosphate pyrophosphokinase (317 aa).

ATP-binding positions include 43 to 45 (DGE) and 102 to 103 (RQ). Mg(2+) is bound by residues His136 and Asp175. Lys198 is a catalytic residue. Residues Arg200, Asp224, and 228–232 (DTAGT) each bind D-ribose 5-phosphate.

Belongs to the ribose-phosphate pyrophosphokinase family. Class I subfamily. In terms of assembly, homohexamer. Requires Mg(2+) as cofactor.

It localises to the cytoplasm. It catalyses the reaction D-ribose 5-phosphate + ATP = 5-phospho-alpha-D-ribose 1-diphosphate + AMP + H(+). The protein operates within metabolic intermediate biosynthesis; 5-phospho-alpha-D-ribose 1-diphosphate biosynthesis; 5-phospho-alpha-D-ribose 1-diphosphate from D-ribose 5-phosphate (route I): step 1/1. Functionally, involved in the biosynthesis of the central metabolite phospho-alpha-D-ribosyl-1-pyrophosphate (PRPP) via the transfer of pyrophosphoryl group from ATP to 1-hydroxyl of ribose-5-phosphate (Rib-5-P). The sequence is that of Ribose-phosphate pyrophosphokinase from Corynebacterium ammoniagenes (Brevibacterium ammoniagenes).